The primary structure comprises 473 residues: Cannabinoid receptor 1 (473 aa).

The Extracellular portion of the chain corresponds to 1 to 118 (MKSILDGLAD…CFMILNPSQQ (118 aa)). The required for mitochondrial localization stretch occupies residues 2 to 23 (KSILDGLADTTFRTITTDLLYV). 2 N-linked (GlcNAc...) asparagine glycosylation sites follow: Asn79 and Asn85. The chain crosses the membrane as a helical span at residues 119 to 144 (LAIAVLSLTLGTFTVLENLLVLCVIL). The Cytoplasmic portion of the chain corresponds to 145–156 (HSRSLRCRPSYH). A helical membrane pass occupies residues 157-177 (FIGSLAVADLLGSVIFVYSFV). Residues 178 to 189 (DFHVFHRKDSPN) are Extracellular-facing. The helical transmembrane segment at 190 to 214 (VFLFKLGGVTASFTASVGSLFLTAI) threads the bilayer. At 215 to 234 (DRYISIHRPLAYKRIVTRPK) the chain is on the cytoplasmic side. A helical transmembrane segment spans residues 235-257 (AVVAFCVMWTIAIVIAVLPLLGW). Residues 258–275 (NCKKLNSVCSDIFPLIDE) are Extracellular-facing. Residues 276–301 (TYLMFWIGVTSILLLFIVYAYMYILW) traverse the membrane as a helical segment. Over 302–346 (KAHSHAVRMLQRGTQKSIIIQSTEDGKVQITRPDQTRMDIRLAKT) the chain is Cytoplasmic. Residues 347–367 (LVLILVVLIICWGPLLAIMVY) form a helical membrane-spanning segment. At 368-379 (DVFGKMNKLIKT) the chain is on the extracellular side. Residues 380–401 (IFAFCSMLCLLNSTVNPIIYAL) form a helical membrane-spanning segment. Residues 402–473 (RSKDLRHAFR…VSTDTTAEAL (72 aa)) are Cytoplasmic-facing. A lipid anchor (S-palmitoyl cysteine) is attached at Cys417.

Belongs to the G-protein coupled receptor 1 family. Palmitoylation at Cys-417 is important for recruitment at both plasma membrane and lipid rafts and association with G protein alpha subunits.

It is found in the cell membrane. Its subcellular location is the mitochondrion outer membrane. The protein localises to the cell projection. The protein resides in the axon. It localises to the presynapse. Functionally, G-protein coupled receptor for cannabinoids. Mediates many cannabinoid-induced effects in the central nervous system (CNS), as well as in peripheral tissues. Regulates cellular respiration and energy production in response to cannabinoids. Signaling typically involves reduction in cyclic AMP. The polypeptide is Cannabinoid receptor 1 (CNR1) (Taeniopygia guttata (Zebra finch)).